The primary structure comprises 547 residues: Chaperonin GroEL 1 (547 aa).

Residues 30–33 (TLGP), K51, 87–91 (DGTTT), G415, and D495 contribute to the ATP site.

It belongs to the chaperonin (HSP60) family. In terms of assembly, forms a cylinder of 14 subunits composed of two heptameric rings stacked back-to-back. Interacts with the co-chaperonin GroES.

It is found in the cytoplasm. It carries out the reaction ATP + H2O + a folded polypeptide = ADP + phosphate + an unfolded polypeptide.. Together with its co-chaperonin GroES, plays an essential role in assisting protein folding. The GroEL-GroES system forms a nano-cage that allows encapsulation of the non-native substrate proteins and provides a physical environment optimized to promote and accelerate protein folding. This chain is Chaperonin GroEL 1, found in Azorhizobium caulinodans (strain ATCC 43989 / DSM 5975 / JCM 20966 / LMG 6465 / NBRC 14845 / NCIMB 13405 / ORS 571).